Reading from the N-terminus, the 374-residue chain is Aminomethyltransferase (374 aa).

It belongs to the GcvT family. The glycine cleavage system is composed of four proteins: P, T, L and H.

It catalyses the reaction N(6)-[(R)-S(8)-aminomethyldihydrolipoyl]-L-lysyl-[protein] + (6S)-5,6,7,8-tetrahydrofolate = N(6)-[(R)-dihydrolipoyl]-L-lysyl-[protein] + (6R)-5,10-methylene-5,6,7,8-tetrahydrofolate + NH4(+). The glycine cleavage system catalyzes the degradation of glycine. The chain is Aminomethyltransferase from Prochlorococcus marinus (strain MIT 9303).